The primary structure comprises 1088 residues: DNA-directed RNA polymerase subunit beta (1088 aa).

The protein belongs to the RNA polymerase beta chain family. In terms of assembly, in plastids the minimal PEP RNA polymerase catalytic core is composed of four subunits: alpha, beta, beta', and beta''. When a (nuclear-encoded) sigma factor is associated with the core the holoenzyme is formed, which can initiate transcription.

It is found in the plastid. The protein resides in the chloroplast. The enzyme catalyses RNA(n) + a ribonucleoside 5'-triphosphate = RNA(n+1) + diphosphate. In terms of biological role, DNA-dependent RNA polymerase catalyzes the transcription of DNA into RNA using the four ribonucleoside triphosphates as substrates. This chain is DNA-directed RNA polymerase subunit beta, found in Chlorokybus atmophyticus (Soil alga).